A 267-amino-acid chain; its full sequence is NAD-capped RNA hydrolase NudC (267 aa).

Substrate is bound at residue arginine 70. Zn(2+)-binding residues include cysteine 99 and cysteine 102. Glutamate 112 provides a ligand contact to substrate. Zn(2+) contacts are provided by cysteine 117 and cysteine 122. Residue tyrosine 127 participates in substrate binding. The region spanning proline 128–threonine 257 is the Nudix hydrolase domain. Residues alanine 166, glutamate 182, and glutamate 186 each coordinate a divalent metal cation. Positions glycine 167–glycine 188 match the Nudix box motif. Residue glutamine 200 to serine 207 coordinates substrate. Glutamate 227 contacts a divalent metal cation. Alanine 250 provides a ligand contact to substrate.

It belongs to the Nudix hydrolase family. NudC subfamily. In terms of assembly, homodimer. The cofactor is Mg(2+). It depends on Mn(2+) as a cofactor. Zn(2+) is required as a cofactor.

The enzyme catalyses a 5'-end NAD(+)-phospho-ribonucleoside in mRNA + H2O = a 5'-end phospho-adenosine-phospho-ribonucleoside in mRNA + beta-nicotinamide D-ribonucleotide + 2 H(+). It catalyses the reaction NAD(+) + H2O = beta-nicotinamide D-ribonucleotide + AMP + 2 H(+). It carries out the reaction NADH + H2O = reduced beta-nicotinamide D-ribonucleotide + AMP + 2 H(+). MRNA decapping enzyme that specifically removes the nicotinamide adenine dinucleotide (NAD) cap from a subset of mRNAs by hydrolyzing the diphosphate linkage to produce nicotinamide mononucleotide (NMN) and 5' monophosphate mRNA. The NAD-cap is present at the 5'-end of some mRNAs and stabilizes RNA against 5'-processing. Has preference for mRNAs with a 5'-end purine. Catalyzes the hydrolysis of a broad range of dinucleotide pyrophosphates. This Mannheimia succiniciproducens (strain KCTC 0769BP / MBEL55E) protein is NAD-capped RNA hydrolase NudC.